A 245-amino-acid polypeptide reads, in one-letter code: Sec-independent protein translocase protein TatC (245 aa).

6 helical membrane-spanning segments follow: residues 17–37 (FISV…RSYI), 73–93 (FFAA…KFVA), 107–127 (FVSF…FVVV), 159–179 (VVVA…FAKI), 191–207 (FRIA…FMTP), and 210–230 (VLSQ…SILI).

It belongs to the TatC family. In terms of assembly, the Tat system comprises two distinct complexes: a TatABC complex, containing multiple copies of TatA, TatB and TatC subunits, and a separate TatA complex, containing only TatA subunits. Substrates initially bind to the TatABC complex, which probably triggers association of the separate TatA complex to form the active translocon.

It localises to the cell inner membrane. Functionally, part of the twin-arginine translocation (Tat) system that transports large folded proteins containing a characteristic twin-arginine motif in their signal peptide across membranes. Together with TatB, TatC is part of a receptor directly interacting with Tat signal peptides. This chain is Sec-independent protein translocase protein TatC, found in Campylobacter jejuni subsp. jejuni serotype O:2 (strain ATCC 700819 / NCTC 11168).